We begin with the raw amino-acid sequence, 576 residues long: 4-alpha-glucanotransferase, chloroplastic/amyloplastic (576 aa).

The N-terminal 52 residues, Met1–Ala52, are a transit peptide targeting the chloroplast.

This sequence belongs to the disproportionating enzyme family. As to expression, present in leaves, stems, roots, and stolons but is most abundant in developing and mature tubers.

The protein localises to the plastid. The protein resides in the chloroplast. Its subcellular location is the amyloplast. The enzyme catalyses Transfers a segment of a (1-&gt;4)-alpha-D-glucan to a new position in an acceptor, which may be glucose or a (1-&gt;4)-alpha-D-glucan.. May act during starch breakdown to convert small oligosaccharides into larger molecules upon which starch phosphorylase can act, or may change the structure of starch molecules and grain architecture by modifying chain length, or may generate from starch and glucose oligosaccharides which can serve either as primers for new starch phosphoenzyme. This is 4-alpha-glucanotransferase, chloroplastic/amyloplastic (DPEP) from Solanum tuberosum (Potato).